The following is a 469-amino-acid chain: Glutamate--tRNA ligase (469 aa).

A 'HIGH' region motif is present at residues 11 to 21; sequence PSPTGFIHLGN. The short motif at 243–247 is the 'KMSKS' region element; the sequence is KMSKR. Lysine 246 provides a ligand contact to ATP.

The protein belongs to the class-I aminoacyl-tRNA synthetase family. Glutamate--tRNA ligase type 1 subfamily. As to quaternary structure, monomer.

Its subcellular location is the cytoplasm. The enzyme catalyses tRNA(Glu) + L-glutamate + ATP = L-glutamyl-tRNA(Glu) + AMP + diphosphate. Its function is as follows. Catalyzes the attachment of glutamate to tRNA(Glu) in a two-step reaction: glutamate is first activated by ATP to form Glu-AMP and then transferred to the acceptor end of tRNA(Glu). The sequence is that of Glutamate--tRNA ligase from Burkholderia ambifaria (strain MC40-6).